Here is a 679-residue protein sequence, read N- to C-terminus: WD repeat-containing protein 48 homolog (679 aa).

8 WD repeats span residues 26-65 (QHRNGVNALQLDSNNGKLYSAGRDAIIRVWNTRTEANEKY), 71-110 (HHNDWVNDIVLCCNGRNLISASCDTTVKVWNAHKGFCMST), 113-152 (THRDYVQALAYAKDREQVASAGLDKAIFLWDVNTLTALTA), 164-203 (GSKDSIYSLAMNPSGTVIVSGSTENILRIWDPRTCMRSMK), 206-245 (GHTENVRCLVVSPDGNQVVSGSSDGTIKVWNLGQQRCIQT), 248-287 (VHKEGVWSLLMSENFQYIISGSRDRNIIVTEMRNPSNKML), 290-329 (EEKAPVLSLGYNIDKTGVWATTWNSDIRCWKLPMYDRCVL), and 349-388 (KGGAAIKECTVLNDKRYIITKDSQDQVVVYDVLRVTKKEE). The interval 594–615 (PSAGNANNSLQNSQSDANSEGS) is disordered.

Belongs to the WD repeat WDR48 family. Catalytic component of the Usp12-46 deubiquitylase complex consisting of Usp12-46, Wdr20 and Uaf1; regulatory subunit that, together wtih Wdr20, stabilizes Usp12-46. The Usp12-46 deubiquitylase complex associates with arr/arrow; the interaction leads to deubiquitination and stabilization of arr/arrow.

Regulatory component of the Usp12-46 deubiquitylase complex. activates deubiquitination by increasing the catalytic turnover without increasing the affinity of deubiquitinating enzymes for the substrate. The complex deubiquitylates the wg/wingless-signaling receptor arr/arrow, which stabilizes the receptor and increases its concentration at the cell surface; this enhances the sensitivity of cells to wg/wingless-signal stimulation. This increases the amplitude and spatial range of the signaling response to the wg/wingless morphogen gradient, facilitating the precise concentration-dependent regulation of its target genes. Together with Wdr20 and Usp12-46 required for wg/wingless-mediated signaling in the wing imaginal disc and for wg/wingless-dependent regulation of intestinal stem cell proliferation. This Drosophila mojavensis (Fruit fly) protein is WD repeat-containing protein 48 homolog.